The sequence spans 201 residues: Rho GDP-dissociation inhibitor 2 (201 aa).

The interval 1-38 (MTEKAPEPHVEEDDDDELDSKLNYKPPPQKSLKELQEM) is disordered. At threonine 2 the chain carries N-acetylthreonine. The residue at position 21 (lysine 21) is an N6-acetyllysine. Tyrosine 24 carries the phosphotyrosine modification. 5 positions are modified to N6-acetyllysine: lysine 25, lysine 40, lysine 47, lysine 102, and lysine 124. Phosphoserine is present on serine 145. Residue lysine 175 is modified to N6-acetyllysine.

The protein belongs to the Rho GDI family. Interacts with RHOA. Interacts with RAC1. Interacts with RAC2. Interacts with CDC42. As to expression, detected in bone marrow, thymus and spleen.

Its subcellular location is the cytoplasm. It localises to the cytosol. Regulates the GDP/GTP exchange reaction of the Rho proteins by inhibiting the dissociation of GDP from them, and the subsequent binding of GTP to them. Regulates reorganization of the actin cytoskeleton mediated by Rho family members. The polypeptide is Rho GDP-dissociation inhibitor 2 (ARHGDIB) (Homo sapiens (Human)).